A 957-amino-acid chain; its full sequence is Ribonuclease 3-like protein 3 (957 aa).

The RNase III 1 domain maps to Val-4 to Asn-142. In terms of domain architecture, DRBM 1 spans Asn-307–Ser-382. Positions Val-415 to Lys-551 constitute an RNase III 2 domain. 2 consecutive DRBM domains span residues Glu-566–Glu-645 and Asp-837–Ser-912.

Functionally, ribonuclease that cleaves double-stranded RNA (dsRNA). The sequence is that of Ribonuclease 3-like protein 3 (RTL3) from Arabidopsis thaliana (Mouse-ear cress).